We begin with the raw amino-acid sequence, 627 residues long: uncharacterized protein (627 aa).

The span at 1–20 (MAKFKKDLTTKNKDTDRLSE) shows a compositional bias: basic and acidic residues. Disordered stretches follow at residues 1 to 22 (MAKF…SEEI) and 578 to 606 (LSLG…LLPV). Residues 582 to 592 (SEEEQGQEETE) show a composition bias toward acidic residues.

This is an uncharacterized protein from Rickettsia prowazekii (strain Madrid E).